Reading from the N-terminus, the 764-residue chain is Kinesin-like protein KIN-14N (764 aa).

The disordered stretch occupies residues 1–50 (MSTRATRPGMLHQKENAADAQAGKRQRTAAGSAARAPLSANAAPPAPDPA). A compositionally biased stretch (low complexity) spans 29 to 50 (AAGSAARAPLSANAAPPAPDPA). Positions 105–416 (AEIGKLNGLL…RLHNTILELK (312 aa)) form a coiled coil. The 330-residue stretch at 418–747 (NIRVFCRVRP…LRFAARVNSC (330 aa)) folds into the Kinesin motor domain. Residue 498 to 505 (GQTGSGKT) participates in ATP binding.

Belongs to the TRAFAC class myosin-kinesin ATPase superfamily. Kinesin family. KIN-14 subfamily.

This Oryza sativa subsp. japonica (Rice) protein is Kinesin-like protein KIN-14N.